The sequence spans 147 residues: TRAF-interacting protein with FHA domain-containing protein B (147 aa).

Positions 36–108 constitute an FHA domain; sequence LLVGRGQNTH…LGTINRISFS (73 aa).

As to quaternary structure, interacts with TIFA. In terms of tissue distribution, expressed at high levels in spleen and at moderate levels in lung, thymus, and small intestine.

In terms of biological role, inhibits TIFA-mediated TRAF6 activation possibly by inducing a conformational change in TIFA. This is TRAF-interacting protein with FHA domain-containing protein B from Mus musculus (Mouse).